Reading from the N-terminus, the 474-residue chain is 3-isopropylmalate dehydratase large subunit (474 aa).

[4Fe-4S] cluster is bound by residues C350, C411, and C414.

This sequence belongs to the aconitase/IPM isomerase family. LeuC type 1 subfamily. As to quaternary structure, heterodimer of LeuC and LeuD. Requires [4Fe-4S] cluster as cofactor.

The catalysed reaction is (2R,3S)-3-isopropylmalate = (2S)-2-isopropylmalate. It participates in amino-acid biosynthesis; L-leucine biosynthesis; L-leucine from 3-methyl-2-oxobutanoate: step 2/4. Functionally, catalyzes the isomerization between 2-isopropylmalate and 3-isopropylmalate, via the formation of 2-isopropylmaleate. The protein is 3-isopropylmalate dehydratase large subunit of Hydrogenovibrio crunogenus (strain DSM 25203 / XCL-2) (Thiomicrospira crunogena).